Here is a 33-residue protein sequence, read N- to C-terminus: Dolabellanin-B2 (33 aa).

In terms of processing, contains two disulfide bonds. Post-translationally, up to two of the methionines may be oxidized to methionine sulfoxides.

It is found in the secreted. In terms of biological role, has antibacterial activity against Gram-negative bacteria E.coli JM109 and DH5-alpha, H.influenza IID 983, and V.vulnificus RIMD 2219009. Has antibacterial activity against Gram-positive bacteria S.aureus IID 1677, B.subtilis RIMD 0225014 and L.monocytogenes VIU206. Possesses antifungal activity against S.cerevisiae A581A, S.pombe IFO 1628, C.albicans ATCC 36232 and TIMM-1623, and C.tropicalis TIMM-0313. The chain is Dolabellanin-B2 from Dolabella auricularia (Shoulderblade sea cat).